The primary structure comprises 381 residues: Succinyl-diaminopimelate desuccinylase (381 aa).

Histidine 69 serves as a coordination point for Zn(2+). The active site involves aspartate 71. Aspartate 103 provides a ligand contact to Zn(2+). Residue glutamate 137 is the Proton acceptor of the active site. Zn(2+) contacts are provided by glutamate 138, glutamate 166, and histidine 355.

This sequence belongs to the peptidase M20A family. DapE subfamily. As to quaternary structure, homodimer. Zn(2+) serves as cofactor. The cofactor is Co(2+).

The enzyme catalyses N-succinyl-(2S,6S)-2,6-diaminopimelate + H2O = (2S,6S)-2,6-diaminopimelate + succinate. It functions in the pathway amino-acid biosynthesis; L-lysine biosynthesis via DAP pathway; LL-2,6-diaminopimelate from (S)-tetrahydrodipicolinate (succinylase route): step 3/3. Its function is as follows. Catalyzes the hydrolysis of N-succinyl-L,L-diaminopimelic acid (SDAP), forming succinate and LL-2,6-diaminopimelate (DAP), an intermediate involved in the bacterial biosynthesis of lysine and meso-diaminopimelic acid, an essential component of bacterial cell walls. The sequence is that of Succinyl-diaminopimelate desuccinylase from Rickettsia rickettsii (strain Iowa).